Reading from the N-terminus, the 200-residue chain is Pyridoxal 5'-phosphate synthase subunit PdxT (200 aa).

Position 46–48 (46–48 (GES)) interacts with L-glutamine. Cys78 (nucleophile) is an active-site residue. Residues Arg107 and 138 to 139 (IR) contribute to the L-glutamine site. Residues His175 and Glu177 each act as charge relay system in the active site.

It belongs to the glutaminase PdxT/SNO family. As to quaternary structure, in the presence of PdxS, forms a dodecamer of heterodimers. Only shows activity in the heterodimer.

The catalysed reaction is aldehydo-D-ribose 5-phosphate + D-glyceraldehyde 3-phosphate + L-glutamine = pyridoxal 5'-phosphate + L-glutamate + phosphate + 3 H2O + H(+). It catalyses the reaction L-glutamine + H2O = L-glutamate + NH4(+). Its pathway is cofactor biosynthesis; pyridoxal 5'-phosphate biosynthesis. In terms of biological role, catalyzes the hydrolysis of glutamine to glutamate and ammonia as part of the biosynthesis of pyridoxal 5'-phosphate. The resulting ammonia molecule is channeled to the active site of PdxS. The chain is Pyridoxal 5'-phosphate synthase subunit PdxT from Corynebacterium glutamicum (strain ATCC 13032 / DSM 20300 / JCM 1318 / BCRC 11384 / CCUG 27702 / LMG 3730 / NBRC 12168 / NCIMB 10025 / NRRL B-2784 / 534).